Reading from the N-terminus, the 129-residue chain is Large ribosomal subunit protein bL20 (129 aa).

It belongs to the bacterial ribosomal protein bL20 family.

Its function is as follows. Binds directly to 23S ribosomal RNA and is necessary for the in vitro assembly process of the 50S ribosomal subunit. It is not involved in the protein synthesizing functions of that subunit. The protein is Large ribosomal subunit protein bL20 of Mycobacteroides abscessus (strain ATCC 19977 / DSM 44196 / CCUG 20993 / CIP 104536 / JCM 13569 / NCTC 13031 / TMC 1543 / L948) (Mycobacterium abscessus).